We begin with the raw amino-acid sequence, 221 residues long: Putative transmembrane protein ORF25 (221 aa).

The first 23 residues, 1–23 (MTLAAKLIVLVYVALCFVNESTS), serve as a signal peptide directing secretion. Residues Asn19 and Asn179 are each glycosylated (N-linked (GlcNAc...) asparagine; by host). At 24 to 191 (QDHSNIYHET…LAKARGVPMS (168 aa)) the chain is on the extracellular side. Residues 192 to 212 (VSVISGICAIILVIFPIFITI) traverse the membrane as a helical segment. Over 213-221 (ANLRRVYLH) the chain is Cytoplasmic.

It localises to the host membrane. This chain is Putative transmembrane protein ORF25, found in Ostreid herpesvirus 1 (isolate France) (OsHV-1).